The sequence spans 21 residues: Glucose-1-phosphate adenylyltransferase large subunit (21 aa).

The interval 1–21 (SVTADNASETKVREIGQEKSS) is disordered. The span at 8–21 (SETKVREIGQEKSS) shows a compositional bias: basic and acidic residues.

This sequence belongs to the bacterial/plant glucose-1-phosphate adenylyltransferase family. As to quaternary structure, heterotetramer.

It is found in the plastid. Its subcellular location is the chloroplast. The protein resides in the amyloplast. The enzyme catalyses alpha-D-glucose 1-phosphate + ATP + H(+) = ADP-alpha-D-glucose + diphosphate. It functions in the pathway glycan biosynthesis; starch biosynthesis. Its activity is regulated as follows. Activated by 3'phosphoglycerate, inhibited by orthophosphate. Allosteric regulation. Functionally, this protein plays a role in synthesis of starch. It catalyzes the synthesis of the activated glycosyl donor, ADP-glucose from Glc-1-P and ATP. This Spinacia oleracea (Spinach) protein is Glucose-1-phosphate adenylyltransferase large subunit.